We begin with the raw amino-acid sequence, 462 residues long: O-methyltransferase CTB2 (462 aa).

D289 serves as a coordination point for S-adenosyl-L-methionine. The active-site Proton acceptor is the H340.

Belongs to the class I-like SAM-binding methyltransferase superfamily. Cation-independent O-methyltransferase family. COMT subfamily.

Its pathway is mycotoxin biosynthesis. Its function is as follows. O-methyltransferase; part of the gene cluster that mediates the biosynthesis of cercosporin, a light-activated, non-host-selective toxin. The perylenequinone chromophore of cercosporin absorbs light energy to attain an electronically-activated triplet state and produces active oxygen species such as the hydroxyl radical, superoxide, hydrogen peroxide or singlet oxygen upon reaction with oxygen molecules. These reactive oxygen species cause damage to various cellular components including lipids, proteins and nucleic acids. The first step of cercosporin biosynthesis is performed by the polyketide synthase CTB1 which catalyzes the formation of nor-toralactone. The starter unit acyltransferase (SAT) domain of CTB1 initiates polyketide extension by the selective utilization of acetyl-CoA, which is elongated to the heptaketide in the beta-ketoacyl synthase (KS) domain by successive condensations with six malonyl units introduced by the malonyl acyltransferase (MAT) domain. The product template (PT) domain catalyzes C4-C9 and C2-C11 aldol cyclizations and dehydrations to a trihydroxynaphthalene, which is thought to be delivered to the thioesterase (TE) domain for product release. The bifunctional enzyme CTB3 then methylates nor-toralactone to toralactone before conducting an unusual oxidative aromatic ring opening. The O-methyltransferase CTB2 further methylates the nascent OH-6 of the CBT3 product, blocking further oxidation at this site before the reductase CTB6 reduces the 2-oxopropyl ketone at position C7, giving naphthalene. The FAD-dependent monooxygenase CTB5 in concert with the multicopper oxidase CTB12 are responsible for homodimerization of naphthalene with CTB7 installing the dioxepine moiety, finally producing cercosporin. The fasciclin domain-containing protein CTB11 might act with CTB5 and CTB12 whereas the roles of CTB9 and CTB10 have still to be elucidated. The sequence is that of O-methyltransferase CTB2 from Cercospora beticola (Sugarbeet leaf spot fungus).